Consider the following 473-residue polypeptide: H(+)/Cl(-) exchange transporter ClcA (473 aa).

Residues 1 to 32 (MKTDTPSLETPQAARLRRRQLIRQLLERDKTP) lie on the Cytoplasmic side of the membrane. The helical transmembrane segment at 33-69 (LAILFMAAVVGTLVGLAAVAFDKGVAWLQNQRMGALV) threads the bilayer. The Periplasmic segment spans residues 70–76 (HTADNYP). A helical transmembrane segment spans residues 77–100 (LLLTVAFLCSAVLAMFGYFLVRKY). Residues 106–110 (GSGIP) carry the Selectivity filter part_1 motif. Residue Ser-107 participates in chloride binding. Positions 109 to 116 (IPEIEGAL) form an intramembrane region, helical. Residues 117-123 (EDQRPVR) lie on the Cytoplasmic side of the membrane. 2 helical membrane-spanning segments follow: residues 124-141 (WWRV…TLGG) and 148-166 (EGPT…LDIF). Residues 146–150 (GREGP) carry the Selectivity filter part_2 motif. The Cytoplasmic portion of the chain corresponds to 167–176 (RLKGDEARHT). Intramembrane regions (helical) lie at residues 177–189 (LLAT…LAAA) and 193–201 (PLAGILFII). Over 202-214 (EEMRPQFRYTLIS) the chain is Cytoplasmic. The helical transmembrane segment at 215 to 232 (IKAVFIGVIMSTIMYRIF) threads the bilayer. The Periplasmic segment spans residues 233 to 252 (NHEVALIDVGKLSDAPLNTL). A helical transmembrane segment spans residues 253 to 281 (WLYLILGIIFGIFGPIFNKWVLGMQDLLH). The Cytoplasmic portion of the chain corresponds to 282 to 287 (RVHGGN). Residues 288–309 (ITKWVLMGGAIGGLCGLLGFVA) traverse the membrane as a helical segment. The Periplasmic portion of the chain corresponds to 310–329 (PATSGGGFNLIPIATAGNFS). The next 2 helical transmembrane spans lie at 330-349 (MGML…LCFS) and 355-376 (GIFA…MVAV). The Selectivity filter part_3 motif lies at 355–359 (GIFAP). 2 residues coordinate chloride: Ile-356 and Phe-357. The Periplasmic portion of the chain corresponds to 377-386 (ELFPQYHLEA). The segment at residues 387–401 (GTFAIAGMGALLAAS) is an intramembrane region (helical). The note=Loop between two helices intramembrane region spans 402–404 (IRA). An intramembrane region (helical) is located at residues 405–416 (PLTGIILVLEMT). Residues 417-421 (DNYQL) constitute an intramembrane region (note=Loop between two helices). A helical membrane pass occupies residues 422 to 438 (ILPMIITGLGATLLAQF). Topologically, residues 439-473 (TGGKPLYSAILARTLAKQEAEQLARSKAASASENT) are cytoplasmic. Tyr-445 contacts chloride.

It belongs to the chloride channel (TC 2.A.49) family. ClcA subfamily. As to quaternary structure, homodimer.

The protein localises to the cell inner membrane. It catalyses the reaction 2 chloride(in) + H(+)(out) = 2 chloride(out) + H(+)(in). Proton-coupled chloride transporter. Functions as antiport system and exchanges two chloride ions for 1 proton. Probably acts as an electrical shunt for an outwardly-directed proton pump that is linked to amino acid decarboxylation, as part of the extreme acid resistance (XAR) response. This is H(+)/Cl(-) exchange transporter ClcA from Escherichia coli O139:H28 (strain E24377A / ETEC).